A 424-amino-acid chain; its full sequence is Putative glutamate--cysteine ligase 2-3 (424 aa).

Disordered stretches follow at residues 1–20 and 405–424; these read MQMA…PVLV and GAAA…VRRP.

Belongs to the glutamate--cysteine ligase type 2 family. YbdK subfamily.

The catalysed reaction is L-cysteine + L-glutamate + ATP = gamma-L-glutamyl-L-cysteine + ADP + phosphate + H(+). ATP-dependent carboxylate-amine ligase which exhibits weak glutamate--cysteine ligase activity. The polypeptide is Putative glutamate--cysteine ligase 2-3 (Paenarthrobacter aurescens (strain TC1)).